Consider the following 31-residue polypeptide: Cytolysin Oshem 2 (31 aa).

The protein localises to the secreted. It is found in the nematocyst. The protein resides in the target cell membrane. Its function is as follows. Cytolysin that shows weak hemolysis and weak myonecrosis. The sequence is that of Cytolysin Oshem 2 from Olindias sambaquiensis (Hydromedusa).